The chain runs to 322 residues: Pantothenate kinase (322 aa).

Position 100-107 (100-107) interacts with ATP; sequence GSVAVGKS.

The protein belongs to the prokaryotic pantothenate kinase family.

Its subcellular location is the cytoplasm. The catalysed reaction is (R)-pantothenate + ATP = (R)-4'-phosphopantothenate + ADP + H(+). The protein operates within cofactor biosynthesis; coenzyme A biosynthesis; CoA from (R)-pantothenate: step 1/5. The chain is Pantothenate kinase from Brucella canis (strain ATCC 23365 / NCTC 10854 / RM-666).